An 839-amino-acid polypeptide reads, in one-letter code: Taste receptor type 1 member 2 (839 aa).

Residues 1–19 form the signal peptide; that stretch reads MGPRAKTISSLFFLLWVLA. The Extracellular segment spans residues 20–566; that stretch reads EPAENSDFYL…VFLEWHEAPT (547 aa). N-linked (GlcNAc...) asparagine glycans are attached at residues Asn84, Asn248, Asn292, Asn312, Asn368, Asn428, Asn487, and Asn527. Residues 567–587 form a helical membrane-spanning segment; it reads IAVALLAALGFLSTLAILVIF. Residues 588–602 are Cytoplasmic-facing; it reads WRHFQTPIVRSAGGP. A helical transmembrane segment spans residues 603–623; the sequence is MCFLMLTLLLVAYMVVPVYVG. Over 624–635 the chain is Extracellular; sequence PPKVSTCLCRQA. A helical membrane pass occupies residues 636–656; sequence LFPLCFTICISCIAVRSFQIV. The Cytoplasmic segment spans residues 657–681; the sequence is CAFKMASRFPRAYSYWVRYQGPYVS. The chain crosses the membrane as a helical span at residues 682–702; sequence MAFITVLKMVIVVIGMLATGL. The Extracellular segment spans residues 703-727; it reads SPTTRTDPDDPKITIVSCNPNYRNS. A helical transmembrane segment spans residues 728–748; it reads LLFNTSLDLLLSVVGFSFAYM. Residues 749–760 are Cytoplasmic-facing; it reads GKELPTNYNEAK. Residues 761–781 form a helical membrane-spanning segment; it reads FITLSMTFYFTSSVSLCTFMS. Over 782–784 the chain is Extracellular; the sequence is AYS. A helical transmembrane segment spans residues 785-805; the sequence is GVLVTIVDLLVTVLNLLAISL. Over 806–839 the chain is Cytoplasmic; sequence GYFGPKCYMILFYPERNTPAYFNSMIQGYTMRRD.

It belongs to the G-protein coupled receptor 3 family. TAS1R subfamily. Forms heterodimers with TAS1R3.

It is found in the cell membrane. In terms of biological role, putative taste receptor. TAS1R2/TAS1R3 recognizes diverse natural and synthetic sweeteners. This chain is Taste receptor type 1 member 2 (TAS1R2), found in Homo sapiens (Human).